The primary structure comprises 233 residues: Pyridoxal phosphate homeostasis protein (233 aa).

Lys36 carries the N6-(pyridoxal phosphate)lysine modification.

Belongs to the pyridoxal phosphate-binding protein YggS/PROSC family.

In terms of biological role, pyridoxal 5'-phosphate (PLP)-binding protein, which is involved in PLP homeostasis. The sequence is that of Pyridoxal phosphate homeostasis protein from Vibrio alginolyticus.